We begin with the raw amino-acid sequence, 231 residues long: MEEITINIDKIKINDDWKEFLRDEFQKKYFLEIKKQYLNAINQNIIIYPPANLIFNAFNLCPLKEIKIIILGQDPYHQPNQAMGLSFSVPKNVKIPPSLNNIFKELQNDLNITPAKSGDLSSWAKQGVLLLNSILSVEANKAASHSSWGWQEFSDAIIHKLSNEKSGLVFMLWGNYAKNKEILIDNTKHLILKAAHPSPLARTGFLGCKHFSKANEFLKKVGKIPIDWKIV.

Aspartate 74 acts as the Proton acceptor in catalysis.

Belongs to the uracil-DNA glycosylase (UDG) superfamily. UNG family.

It localises to the cytoplasm. It carries out the reaction Hydrolyzes single-stranded DNA or mismatched double-stranded DNA and polynucleotides, releasing free uracil.. Its function is as follows. Excises uracil residues from the DNA which can arise as a result of misincorporation of dUMP residues by DNA polymerase or due to deamination of cytosine. This is Uracil-DNA glycosylase from Campylobacter jejuni subsp. jejuni serotype O:2 (strain ATCC 700819 / NCTC 11168).